The primary structure comprises 78 residues: Acyl carrier protein (78 aa).

The Carrier domain maps to 4–78 (AQIKEKVYDI…QQAIDYIVKK (75 aa)). Position 39 is an O-(pantetheine 4'-phosphoryl)serine (S39).

This sequence belongs to the acyl carrier protein (ACP) family. 4'-phosphopantetheine is transferred from CoA to a specific serine of apo-ACP by AcpS. This modification is essential for activity because fatty acids are bound in thioester linkage to the sulfhydryl of the prosthetic group.

It localises to the cytoplasm. It participates in lipid metabolism; fatty acid biosynthesis. Functionally, carrier of the growing fatty acid chain in fatty acid biosynthesis. This Chlorobium phaeobacteroides (strain DSM 266 / SMG 266 / 2430) protein is Acyl carrier protein.